An 838-amino-acid chain; its full sequence is Probable glucan 1,3-beta-glucosidase D (838 aa).

Basic and acidic residues predominate over residues 1–23; it reads MPSHSRSRDRYRGRDESEPERDR. Residues 1–298 form a disordered region; sequence MPSHSRSRDR…GASDSDMDGA (298 aa). Residues 1–310 are Cytoplasmic-facing; that stretch reads MPSHSRSRDR…GTPFWKKKKT (310 aa). Positions 35–45 are enriched in acidic residues; it reads DYEDDELDDDD. Composition is skewed to basic and acidic residues over residues 111–124, 149–164, 200–221, and 234–246; these read DSPRRRDRHRDGDR, SRDDRRERAYESEREA, AKLRSEYDKEDRSRAKADAKAE, and QPRRLDPFPEETP. Residues 311–331 form a helical; Signal-anchor for type II membrane protein membrane-spanning segment; that stretch reads WIAVGVVVVLLAIIIPVAVVV. Topologically, residues 332–838 are extracellular; sequence SKKNNEKKSD…PDFGDLPENY (507 aa). Residues 335–359 form a disordered region; it reads NNEKKSDSTTDDTTPRNSNLDGISR. N383, N388, N400, N553, and N565 each carry an N-linked (GlcNAc...) asparagine glycan. E604 (proton donor) is an active-site residue. Residues N643 and N696 are each glycosylated (N-linked (GlcNAc...) asparagine). The active-site Nucleophile is E709.

The protein belongs to the glycosyl hydrolase 5 (cellulase A) family.

The protein resides in the cell membrane. It catalyses the reaction Successive hydrolysis of beta-D-glucose units from the non-reducing ends of (1-&gt;3)-beta-D-glucans, releasing alpha-glucose.. In terms of biological role, glucosidase involved in the degradation of cellulosic biomass. Active on lichenan. This is Probable glucan 1,3-beta-glucosidase D (exgD) from Aspergillus terreus (strain NIH 2624 / FGSC A1156).